Reading from the N-terminus, the 427-residue chain is Serine--tRNA ligase (427 aa).

235–237 (TAE) contributes to the L-serine binding site. Residues 266 to 268 (RRE) and Val-282 contribute to the ATP site. L-serine is bound at residue Glu-289. 353-356 (EASS) provides a ligand contact to ATP. L-serine is bound at residue Ser-389.

The protein belongs to the class-II aminoacyl-tRNA synthetase family. Type-1 seryl-tRNA synthetase subfamily. Homodimer. The tRNA molecule binds across the dimer.

Its subcellular location is the cytoplasm. The enzyme catalyses tRNA(Ser) + L-serine + ATP = L-seryl-tRNA(Ser) + AMP + diphosphate + H(+). It carries out the reaction tRNA(Sec) + L-serine + ATP = L-seryl-tRNA(Sec) + AMP + diphosphate + H(+). The protein operates within aminoacyl-tRNA biosynthesis; selenocysteinyl-tRNA(Sec) biosynthesis; L-seryl-tRNA(Sec) from L-serine and tRNA(Sec): step 1/1. Functionally, catalyzes the attachment of serine to tRNA(Ser). Is also able to aminoacylate tRNA(Sec) with serine, to form the misacylated tRNA L-seryl-tRNA(Sec), which will be further converted into selenocysteinyl-tRNA(Sec). In Chlorobium phaeobacteroides (strain BS1), this protein is Serine--tRNA ligase.